The primary structure comprises 1242 residues: Insulin receptor substrate 1 (1242 aa).

S3 bears the Phosphoserine mark. A mediates interaction with PHIP region spans residues 3-137 (SPPESDGFSD…GAGGGGGSCS (135 aa)). One can recognise a PH domain in the interval 12 to 115 (DVRKVGYLRK…WYQALLQLHN (104 aa)). S99 carries the phosphoserine; by CK2 modification. The region spanning 160–264 (FKEVWQVILK…EAMRAMSDEF (105 aa)) is the IRS-type PTB domain. The segment at 262 to 430 (DEFRPRSKSQ…SDGGFISSDE (169 aa)) is disordered. Over residues 269 to 281 (KSQSSSNCSNPIS) the composition is skewed to low complexity. Phosphoserine; by RPS6KB1 occurs at positions 270 and 307. Phosphoserine; by IKKB, MAPK8 and RPS6KB1 is present on S312. Phosphoserine is present on residues S315, S323, S330, S345, and S348. Basic residues predominate over residues 354–363 (THAHRHRGSA). Composition is skewed to low complexity over residues 383–404 (SPSATSPVSLSSSSTSGHGSTS) and 412–424 (SSASVSGSPSDGG). Phosphoserine is present on S419. Phosphothreonine occurs at positions 446 and 453. Y465 carries the phosphotyrosine; by INSR modification. The YXXM motif 1 motif lies at 465-468 (YICM). A Phosphoserine; by RPS6KB1 modification is found at S527. The short motif at 551-554 (YTEM) is the YXXM motif 2 element. Residues 592 to 610 (LERRGGHHRPDSSTLHTDD) show a composition bias toward basic and acidic residues. The disordered stretch occupies residues 592-616 (LERRGGHHRPDSSTLHTDDGYMPMS). Y612 is modified (phosphotyrosine; by INSR). The YXXM motif 3 signature appears at 612-615 (YMPM). A phosphoserine mark is found at S616 and S629. The residue at position 632 (Y632) is a Phosphotyrosine; by INSR. Residues 632–635 (YMPM) carry the YXXM motif 4 motif. S636 carries the post-translational modification Phosphoserine; by RPS6KB1. The residue at position 662 (Y662) is a Phosphotyrosine. Residues 662 to 665 (YMMM) carry the YXXM motif 5 motif. Residues 668 to 693 (SGGCSPDIGGGPSSSSSSSNAVPSGT) form a disordered region. The YXXM motif 6 motif lies at 732 to 735 (YMNM). 2 disordered regions span residues 771–900 (FKHT…VNIE) and 918–937 (SPSVRCPSQLQPAPREEETG). Basic and acidic residues predominate over residues 776 to 785 (RPGEPEEGAR). Residue S794 is modified to Phosphoserine; by AMPK and SIK2. Low complexity predominate over residues 801-815 (AATADDSSSSTSSDS). Position 892 is a phosphoserine (S892). Residue Y896 is modified to Phosphotyrosine; by INSR. The interval 896-898 (YVN) is GRB2-binding. Polar residues predominate over residues 918–928 (SPSVRCPSQLQ). A phosphotyrosine; by INSR mark is found at Y941 and Y989. 3 short sequence motifs (YXXM motif) span residues 941–944 (YMKM), 989–992 (YMTM), and 1012–1015 (YADM). The tract at residues 1057–1146 (SSLLGGPQGP…DVKRHSSASF (90 aa)) is disordered. A compositionally biased stretch (polar residues) spans 1073–1085 (TRVNLSPNRNQSA). S1100 is subject to Phosphoserine. S1101 bears the Phosphoserine; by RPS6KB1 and PKC/PRKCQ mark. Positions 1102 to 1114 (ETFSSTPSATRVG) are enriched in polar residues. Position 1179 is a phosphotyrosine; by INSR (Y1179). Residues K1186 and K1189 each participate in a glycyl lysine isopeptide (Lys-Gly) (interchain with G-Cter in ubiquitin) cross-link. The disordered stretch occupies residues 1190–1242 (QCPQECTPEPQPPPPPPPHQPLGSGESSSTRRSSEDLSAYASISFQKQPEDRQ). A compositionally biased stretch (pro residues) spans 1198-1209 (EPQPPPPPPPHQ). Positions 1210–1220 (PLGSGESSSTR) are enriched in low complexity. Y1229 is subject to Phosphotyrosine; by INSR.

In terms of assembly, interacts with UBTF and PIK3CA. Interacts (via phosphorylated YXXM motifs) with PIK3R1. Interacts with ROCK1 and FER. Interacts (via PH domain) with PHIP. Interacts with GRB2. Interacts with SOCS7. Interacts (via IRS-type PTB domain) with IGF1R and INSR (via the tyrosine-phosphorylated NPXY motif). Interacts with ALK. Interacts with EIF2AK2/PKR. Interacts with GKAP1. Interacts with DGKZ in the absence of insulin; insulin stimulation decreases this interaction. Found in a ternary complex with DGKZ and PIP5K1A in the absence of insulin stimulation. Interacts with SQSTM1; the interaction is disrupted by the presence of tensin TNS2. Interacts with NCK1 (via SH2 domain). Interacts with NCK2 (via SH3 domain). Interacts with SH2B1; this interaction enhances leptin-induced activation of the PI3-kinase pathway. Interacts with DVL2; this interaction promotes the Wnt/beta-catenin signaling pathway. Serine phosphorylation of IRS1 is a mechanism for insulin resistance. Ser-307, Ser-312, Ser-315, and Ser-323 phosphorylations inhibit insulin action through disruption of IRS1 interaction with the insulin receptor INSR. Phosphorylation of Tyr-896 is required for GRB2-binding. Phosphorylated by ALK. Phosphorylated at Ser-270, Ser-307, Ser-636 and Ser-1101 by RPS6KB1; phosphorylation induces accelerated degradation of IRS1. Phosphorylated on tyrosine residues in response to insulin. In skeletal muscles, dephosphorylated on Tyr-612 by TNS2 under anabolic conditions; dephosphorylation results in the proteasomal degradation of IRS1. Post-translationally, ubiquitinated by the Cul7-RING(FBXW8) complex in a mTOR-dependent manner, leading to its degradation: the Cul7-RING(FBXW8) complex recognizes and binds IRS1 previously phosphorylated by S6 kinase (RPS6KB1 or RPS6KB2). Ubiquitinated by TRAF4 through 'Lys-29' linkage; this ubiquitination regulates the interaction of IRS1 with IGFR and IRS1 tyrosine phosphorylation upon IGF1 stimulation. In terms of processing, S-nitrosylation at by BLVRB inhibits its activity.

It localises to the cytoplasm. The protein resides in the nucleus. Its function is as follows. Signaling adapter protein that participates in the signal transduction from two prominent receptor tyrosine kinases, insulin receptor/INSR and insulin-like growth factor I receptor/IGF1R. Plays therefore an important role in development, growth, glucose homeostasis as well as lipid metabolism. Upon phosphorylation by the insulin receptor, functions as a signaling scaffold that propagates insulin action through binding to SH2 domain-containing proteins including the p85 regulatory subunit of PI3K, NCK1, NCK2, GRB2 or SHP2. Recruitment of GRB2 leads to the activation of the guanine nucleotide exchange factor SOS1 which in turn triggers the Ras/Raf/MEK/MAPK signaling cascade. Activation of the PI3K/AKT pathway is responsible for most of insulin metabolic effects in the cell, and the Ras/Raf/MEK/MAPK is involved in the regulation of gene expression and in cooperation with the PI3K pathway regulates cell growth and differentiation. Acts a positive regulator of the Wnt/beta-catenin signaling pathway through suppression of DVL2 autophagy-mediated degradation leading to cell proliferation. The chain is Insulin receptor substrate 1 (IRS1) from Homo sapiens (Human).